The following is a 425-amino-acid chain: GTPase Obg (425 aa).

The Obg domain occupies 1–158; that stretch reads MFIDKARIFV…RWITLELKMI (158 aa). An OBG-type G domain is found at 159 to 330; that stretch reads ADVGLLGFPN…VIAYVSKMLK (172 aa). Residues 165–172, 190–194, 212–215, 282–285, and 311–313 contribute to the GTP site; these read GFPNVGKS, FTTLT, DIPG, NKFD, and SAA. Mg(2+)-binding residues include Ser172 and Thr192. The 82-residue stretch at 344 to 425 folds into the OCT domain; it reads YRPELDIGTE…IYELEFEFYN (82 aa).

This sequence belongs to the TRAFAC class OBG-HflX-like GTPase superfamily. OBG GTPase family. As to quaternary structure, monomer. The cofactor is Mg(2+).

It localises to the cytoplasm. In terms of biological role, an essential GTPase which binds GTP, GDP and possibly (p)ppGpp with moderate affinity, with high nucleotide exchange rates and a fairly low GTP hydrolysis rate. Plays a role in control of the cell cycle, stress response, ribosome biogenesis and in those bacteria that undergo differentiation, in morphogenesis control. This chain is GTPase Obg, found in Clostridioides difficile (strain 630) (Peptoclostridium difficile).